Reading from the N-terminus, the 177-residue chain is Isopentenyl-diphosphate Delta-isomerase 1 (177 aa).

Residues His24 and His30 each coordinate Mn(2+). The region spanning 28-160 (SLHRAISIFI…PHAYSFWLEA (133 aa)) is the Nudix hydrolase domain. Residue Cys65 is part of the active site. Cys65 contacts Mg(2+). His67 contributes to the Mn(2+) binding site. Residue Glu85 participates in Mg(2+) binding. The Mn(2+) site is built by Glu110 and Glu112. The active site involves Glu112.

It belongs to the IPP isomerase type 1 family. The cofactor is Mg(2+). Requires Mn(2+) as cofactor.

It is found in the cytoplasm. It carries out the reaction isopentenyl diphosphate = dimethylallyl diphosphate. Its pathway is isoprenoid biosynthesis; dimethylallyl diphosphate biosynthesis; dimethylallyl diphosphate from isopentenyl diphosphate: step 1/1. Its function is as follows. Catalyzes the 1,3-allylic rearrangement of the homoallylic substrate isopentenyl (IPP) to its highly electrophilic allylic isomer, dimethylallyl diphosphate (DMAPP). The polypeptide is Isopentenyl-diphosphate Delta-isomerase 1 (Aromatoleum aromaticum (strain DSM 19018 / LMG 30748 / EbN1) (Azoarcus sp. (strain EbN1))).